The chain runs to 579 residues: Mitogen-activated protein kinase kinase kinase 7 (579 aa).

Positions 1–300 (MSTASAASSS…FPGADEPLQY (300 aa)) are interaction with MAPK8IP1. Residues 36–291 (IEVEEVVGRG…KIMTHLMRYF (256 aa)) form the Protein kinase domain. Residues 42–50 (VGRGAFGVV) and Lys63 contribute to the ATP site. A Glycyl lysine isopeptide (Lys-Gly) (interchain with G-Cter in ubiquitin) cross-link involves residue Lys72. Asp156 acts as the Proton acceptor in catalysis. Lys158 is covalently cross-linked (Glycyl lysine isopeptide (Lys-Gly) (interchain with G-Cter in ubiquitin)). 2 positions are modified to phosphothreonine; by autocatalysis: Thr184 and Thr187. Phosphoserine; by autocatalysis is present on Ser192. Lys209 is covalently cross-linked (Glycyl lysine isopeptide (Lys-Gly) (interchain with G-Cter in ubiquitin)). 2 disordered regions span residues 301–339 (PCQY…EQVP) and 354–391 (KNQA…MSAD). The segment covering 306-322 (DEGQSNSATSTGSFMDI) has biased composition (polar residues). Composition is skewed to low complexity over residues 323 to 334 (TSTNTSNKSDTN) and 361 to 375 (SESG…RGSS). A phosphoserine mark is found at Ser367, Ser389, and Ser412. Polar residues predominate over residues 416-425 (LTVTGTDPGQ). A disordered region spans residues 416 to 466 (LTVTGTDPGQVSSRSSSPSVRMITTSGPTSEKPARSHPWTPDDSTDTNGSD). Over residues 426–436 (VSSRSSSPSVR) the composition is skewed to low complexity. Ser428 bears the Phosphoserine mark.

It belongs to the protein kinase superfamily. STE Ser/Thr protein kinase family. MAP kinase kinase kinase subfamily. Can form homodimer. Binds both upstream activators and downstream substrates in multimolecular complexes. Interacts with TAB1/MAP3K7IP1, TAB2/MAP3K7IP2 and TAB3/MAP3K7IP3. Identified in the TRIKA2 complex composed of MAP3K7/TAK1, TAB1/MAP3K7IP1 and TAB2/MAP3K7IP2. Interacts with PPM1L and PPM1B/PP2CB. Interaction with PP2A and PPP6C leads to its repressed activity. Interacts with TRAF6 and TAB1/MAP3K7IP1; during IL-1 signaling. Interacts with TAOK1 and TAOK2; interaction with TAOK2 interferes with MAP3K7 interaction with IKKA, thus preventing NF-kappa-B activation. Interacts with DYNC2I2 (via WD domains). Interacts with CYLD and RBCK1. Interacts with TGFBR1; induces MAP3K7/TAK1 activation by TRAF6. Interacts with MAPK8IP1 and SMAD6. Interacts with isoform 1 of VRK2. Interacts with DAB2; the interaction is induced by TGF-beta stimulation and may mediate TGF-beta stimulated JNK activation. Interacts with TRIM5. Part of a complex containing ITCH, NDFIP1 and MAP3K7. Interacts with IFIT5; the interaction synergizes the recruitment of IKK to MAP3K7 and enhances IKK phosphorylation. Interacts with PLEKHM1 (via N- and C-terminus). Found in a complex with SH3RF1, RAC2, MAP2K7/MKK7, MAPK8IP1/JIP1, MAPK8/JNK1 and MAPK9/JNK2. Interacts with SASH1. Interacts with RIPK1. It depends on Mg(2+) as a cofactor. Post-translationally, association with TAB1/MAP3K7IP1 promotes autophosphorylation at Ser-192 and subsequent activation. Association with TAB2/MAP3K7IP2, itself associated with free unanchored Lys-63 polyubiquitin chain, promotes autophosphorylation and subsequent activation of MAP3K7. Dephosphorylation at Ser-192 by PPM1B/PP2CB and at Thr-187 by PP2A and PPP6C leads to inactivation. In terms of processing, 'Lys-48'-linked polyubiquitination at Lys-72 is induced by TNFalpha, and leads to proteasomal degradation. Undergoes 'Lys-48'-linked polyubiquitination catalyzed by ITCH. 'Lys-63'-linked polyubiquitination at Lys-158 by TRIM8 does not lead to proteasomal degradation but contributes to autophosphorylation and activation. Deubiquitinated by CYLD, a protease that selectively cleaves 'Lys-63'-linked ubiquitin chains. Deubiquitinated by USP19; leading to negative regulation of TNF-alpha- and IL-1beta-triggered NF-kappa-B activation.

Its subcellular location is the cytoplasm. It is found in the cell membrane. It carries out the reaction L-seryl-[protein] + ATP = O-phospho-L-seryl-[protein] + ADP + H(+). It catalyses the reaction L-threonyl-[protein] + ATP = O-phospho-L-threonyl-[protein] + ADP + H(+). Activated by pro-inflammatory cytokines and in response to physical and chemical stresses, including osmotic stress, oxidative stress, arsenic and ultraviolet light irradiation. Activated by 'Lys-63'-linked polyubiquitination and by autophosphorylation. Association with TAB1/MAP3K7IP1 and TAB2/MAP3K7IP2 promotes activation through autophosphorylation, whereas PPM1B/PP2CB, PP2A and PPP6C dephosphorylation leads to inactivation. Ceramides are also able to activate MAP3K7/TAK1. Serine/threonine kinase which acts as an essential component of the MAP kinase signal transduction pathway. Plays an important role in the cascades of cellular responses evoked by changes in the environment. Mediates signal transduction of TRAF6, various cytokines including interleukin-1 (IL-1), transforming growth factor-beta (TGFB), TGFB-related factors like BMP2 and BMP4, toll-like receptors (TLR), tumor necrosis factor receptor CD40 and B-cell receptor (BCR). Once activated, acts as an upstream activator of the MKK/JNK signal transduction cascade and the p38 MAPK signal transduction cascade through the phosphorylation and activation of several MAP kinase kinases like MAP2K1/MEK1, MAP2K3/MKK3, MAP2K6/MKK6 and MAP2K7/MKK7. These MAP2Ks in turn activate p38 MAPKs and c-jun N-terminal kinases (JNKs); both p38 MAPK and JNK pathways control the transcription factors activator protein-1 (AP-1). Independently of MAP2Ks and p38 MAPKs, acts as a key activator of NF-kappa-B by promoting activation of the I-kappa-B-kinase (IKK) core complex. Mechanistically, recruited to polyubiquitin chains of RIPK2 and IKBKG/NEMO via TAB2/MAP3K7IP2 and TAB3/MAP3K7IP3, and catalyzes phosphorylation and activation of IKBKB/IKKB component of the IKK complex, leading to NF-kappa-B activation. In osmotic stress signaling, plays a major role in the activation of MAPK8/JNK1, but not that of NF-kappa-B. Promotes TRIM5 capsid-specific restriction activity. Phosphorylates RIPK1 at 'Ser-321' which positively regulates RIPK1 interaction with RIPK3 to promote necroptosis but negatively regulates RIPK1 kinase activity and its interaction with FADD to mediate apoptosis. Phosphorylates STING1 in response to cGAMP-activation, promoting association between STEEP1 and STING1 and STING1 translocation to COPII vesicles. The chain is Mitogen-activated protein kinase kinase kinase 7 (MAP3K7) from Bos taurus (Bovine).